The sequence spans 348 residues: Protein RecA (348 aa).

Residue 67-74 (GPESSGKT) participates in ATP binding.

This sequence belongs to the RecA family.

The protein resides in the cytoplasm. Functionally, can catalyze the hydrolysis of ATP in the presence of single-stranded DNA, the ATP-dependent uptake of single-stranded DNA by duplex DNA, and the ATP-dependent hybridization of homologous single-stranded DNAs. It interacts with LexA causing its activation and leading to its autocatalytic cleavage. The sequence is that of Protein RecA from Salinispora arenicola (strain CNS-205).